The following is a 517-amino-acid chain: Serine hydroxymethyltransferase 1, mitochondrial (517 aa).

Residues 1 to 30 (MAMAMALRRLSSSIDKPIRPLIRSTSCYMS) constitute a mitochondrion transit peptide. Lys286 carries the post-translational modification N6-(pyridoxal phosphate)lysine.

The protein belongs to the SHMT family. Homotetramer. Interacts with GLU1. Interacts with UBP16. The cofactor is pyridoxal 5'-phosphate. Ubiquitinated. Ubiquitous. Mostly expressed in leaves, less abundant in stems, flowers and siliques, and barely detectable in roots.

The protein resides in the mitochondrion. The protein localises to the cytoplasm. It carries out the reaction (6R)-5,10-methylene-5,6,7,8-tetrahydrofolate + glycine + H2O = (6S)-5,6,7,8-tetrahydrofolate + L-serine. Its pathway is one-carbon metabolism; tetrahydrofolate interconversion. Its function is as follows. Functions in the photorespiratory pathway in catalyzing the interconversion of serine and glycine. Involved in controlling cell damage caused by abiotic stress, such as high light and salt and the hypersensitive defense response of plants. The protein is Serine hydroxymethyltransferase 1, mitochondrial of Arabidopsis thaliana (Mouse-ear cress).